A 316-amino-acid polypeptide reads, in one-letter code: Pantothenate kinase (316 aa).

Position 95 to 102 (95 to 102) interacts with ATP; that stretch reads GSVAVGKS.

Belongs to the prokaryotic pantothenate kinase family.

It localises to the cytoplasm. The enzyme catalyses (R)-pantothenate + ATP = (R)-4'-phosphopantothenate + ADP + H(+). Its pathway is cofactor biosynthesis; coenzyme A biosynthesis; CoA from (R)-pantothenate: step 1/5. In Salmonella choleraesuis (strain SC-B67), this protein is Pantothenate kinase.